A 689-amino-acid chain; its full sequence is Acyl-coenzyme A oxidase 1 (689 aa).

FAD contacts are provided by Thr149 and Gly188. Residue Glu444 is the Proton acceptor of the active site.

Belongs to the acyl-CoA oxidase family. In terms of assembly, heteropentamer composed of five different subunits. FAD is required as a cofactor.

It localises to the peroxisome. The catalysed reaction is a 2,3-saturated acyl-CoA + O2 = a (2E)-enoyl-CoA + H2O2. It participates in lipid metabolism; peroxisomal fatty acid beta-oxidation. The protein is Acyl-coenzyme A oxidase 1 (POX1) of Yarrowia lipolytica (strain CLIB 122 / E 150) (Yeast).